We begin with the raw amino-acid sequence, 680 residues long: MKFSSLYCFLLLLIFQTDFGQNEETSRRQRRKMYHRRLRKSSLSTHRSVRQPGIQQMKTVTPAAKLPIINLDYSIEENFESFLSVPGVESSYNVLPGKKGHCLANGMIMYNKAVWSPEPCTTCLCLNGKVLCDETKCHPQMCPQTIIPEGECCPVCSNTEQREPTNLPHKQQSPPWEEMNRALRKEELQLEEDEEEVKQDENREQKKKTFRPGDWGRPINEGQSREGKAQRPEEEGRQAHQHRNPARENEEDDDEEEEDDDDEEEDDDDEDETIRGDTFRMPPRLPIPATPRGIPSLPSMCSLSYKTISCISADLTQIPPLTAPEITSLELIDNSITSIPDEAFNGLPNLERLDLSKNNITSSGIGPKAFKFLKNLMRLNMDGNNLVTIPSELPSTLEELKINENKLQVIDEESLSDLNQLVTLELEGNNLSETNVNSLAFKPLKSLSYLRLGRNKFRIIPQGLPASIEELYLENNQIEEITEISFNHTRKINVIGLRYNKIEENRIAPLAWINQENLESIDLSYNKLYHVPSYLPKSLVHLVLIGNQIERIPGYVFGHMEPGLEYLYLSFNKLVDDGIDRVSFYGAYHSLRELFLDHNELKSIPPGVQEMKALHFLRLNNNKIRNILPEQICNAEEDDDSNLQHLHLENNYIKTREIPSYAFSCIRSYSSIVLKPQNIK.

The first 20 residues, 1-20 (MKFSSLYCFLLLLIFQTDFG), serve as a signal peptide directing secretion. The VWFC domain occupies 100–157 (GHCLANGMIMYNKAVWSPEPCTTCLCLNGKVLCDETKCHPQMCPQTIIPEGECCPVCS). Acidic residues predominate over residues 189-198 (QLEEDEEEVK). The segment at 189–293 (QLEEDEEEVK…RLPIPATPRG (105 aa)) is disordered. The span at 223–238 (QSREGKAQRPEEEGRQ) shows a compositional bias: basic and acidic residues. The segment covering 249–272 (NEEDDDEEEEDDDDEEEDDDDEDE) has biased composition (acidic residues). Positions 275 to 277 (RGD) match the Cell attachment site motif. In terms of domain architecture, LRRNT spans 288 to 325 (PATPRGIPSLPSMCSLSYKTISCISADLTQIPPLTAPE). LRR repeat units follow at residues 349-369 (NLERLDLSKNNITSSGIGPKA), 375-396 (NLMRLNMDGNNLVTIPSELPST), 397-417 (LEELKINENKLQVIDEESLSD), 420-440 (QLVTLELEGNNLSETNVNSLA), 446-466 (SLSYLRLGRNKFRIIPQGLPA), 467-488 (SIEELYLENNQIEEITEISFNH), 491-511 (KINVIGLRYNKIEENRIAPLA), 517-538 (NLESIDLSYNKLYHVPSYLPKS), 539-559 (LVHLVLIGNQIERIPGYVFGH), 563-583 (GLEYLYLSFNKLVDDGIDRVS), 590-611 (SLRELFLDHNELKSIPPGVQEM), 613-634 (ALHFLRLNNNKIRNILPEQICN), and 642-665 (NLQHLHLENNYIKTREIPSYAFSC). An N-linked (GlcNAc...) asparagine glycan is attached at N359. N430 carries an N-linked (GlcNAc...) asparagine glycan. N487 carries an N-linked (GlcNAc...) asparagine glycan.

This sequence belongs to the small leucine-rich proteoglycan (SLRP) family. SLRP class I subfamily. Interacts with numerous extracellular matrix proteins. Interacts with MSL1 and RASSF1.

The protein localises to the secreted. Its subcellular location is the extracellular space. The protein resides in the extracellular matrix. Its function is as follows. Promotes matrix assembly and cell adhesiveness. The protein is Extracellular matrix protein 2 (ECM2) of Bos taurus (Bovine).